Consider the following 366-residue polypeptide: GTPase Obg (366 aa).

One can recognise an Obg domain in the interval 1–159 (MKFLDEAKVY…KTIWLRLKLI (159 aa)). The region spanning 160-327 (ADAGLVGLPN…VLRALRDVIV (168 aa)) is the OBG-type G domain. Residues 166–173 (GLPNAGKS), 191–195 (FTTLH), 212–215 (DIPG), 279–282 (SQID), and 308–310 (SAI) contribute to the GTP site. Residues S173 and T193 each coordinate Mg(2+). A disordered region spans residues 333–366 (DDETISQRPKKHRHKLEDRPQHENGPEESEEGEE). The span at 347-357 (KLEDRPQHENG) shows a compositional bias: basic and acidic residues.

Belongs to the TRAFAC class OBG-HflX-like GTPase superfamily. OBG GTPase family. As to quaternary structure, monomer. The cofactor is Mg(2+).

The protein localises to the cytoplasm. Functionally, an essential GTPase which binds GTP, GDP and possibly (p)ppGpp with moderate affinity, with high nucleotide exchange rates and a fairly low GTP hydrolysis rate. Plays a role in control of the cell cycle, stress response, ribosome biogenesis and in those bacteria that undergo differentiation, in morphogenesis control. This chain is GTPase Obg, found in Allorhizobium ampelinum (strain ATCC BAA-846 / DSM 112012 / S4) (Agrobacterium vitis (strain S4)).